The chain runs to 84 residues: U4-theraphotoxin-Hhn1b (84 aa).

Positions 1-22 (MKVTLTAILTCAAVLVLHTTAA) are cleaved as a signal peptide. Positions 23–47 (EELEESQLMEVGMPDTELAAVDEER) are excised as a propeptide. Cystine bridges form between C51–C65, C55–C76, and C70–C81.

This sequence belongs to the neurotoxin 12 (Hwtx-2) family. 02 (Hwtx-2) subfamily. In terms of tissue distribution, expressed by the venom gland.

The protein resides in the secreted. Its function is as follows. Postsynaptic neurotoxin. The sequence is that of U4-theraphotoxin-Hhn1b from Cyriopagopus hainanus (Chinese bird spider).